A 411-amino-acid chain; its full sequence is uncharacterized protein (411 aa).

It belongs to the peptidase M20 family.

This is an uncharacterized protein from Haemophilus influenzae (strain ATCC 51907 / DSM 11121 / KW20 / Rd).